The sequence spans 95 residues: Co-chaperonin GroES (95 aa).

The protein belongs to the GroES chaperonin family. In terms of assembly, heptamer of 7 subunits arranged in a ring. Interacts with the chaperonin GroEL.

It localises to the cytoplasm. Functionally, together with the chaperonin GroEL, plays an essential role in assisting protein folding. The GroEL-GroES system forms a nano-cage that allows encapsulation of the non-native substrate proteins and provides a physical environment optimized to promote and accelerate protein folding. GroES binds to the apical surface of the GroEL ring, thereby capping the opening of the GroEL channel. The polypeptide is Co-chaperonin GroES (Lachnoclostridium phytofermentans (strain ATCC 700394 / DSM 18823 / ISDg) (Clostridium phytofermentans)).